The following is a 2145-amino-acid chain: MPRNDASSRFSSMTGSSTDSARSNITVKPLPSLPPSASSSSPFAASSNQTSNASRSASHGSRRAAPSRLKTDENGQLSRSFKDSDAQVSPTSTSPCVSPSSITSSNSIREHRMSDLADYRRDLAILDPAGGRASRTQQNNPSSGSLSQIAPWMAAAPTPASSGPLPTSFFNDSTDNLSLSSQTSPGLRNATARPSQTTTGSTESPETLYFTDERRPSIASITTTASSQGSRASGARGGIRKLQGFFGEEFPGRDSSEISLSHPIVGKEHRSHSYSHARPHRDRNYSNATDHGRDASPASRPRTPVPKPEVVPFLYQEADDIARYGEAPVRDILSGPDRERFVNDSSQQNNPPKTSGSGRSGHSIGVHLTGHHHRHNKSNEDPRSLRPTVSREDSTISVPKDRNGSSTMYGTRSRAQSPAPSTTGSYWGHKSGSTDGQTSPGQPKKSFLGRLGRRLKEKDDAPDLKKLGPASQSSLHSRPSRQELSKADGQFARGADGKYQPDVRDGIRPDLARPANGPQTFNKFSLSKKAPRSKTQDDLDEAIGPTDRQDVGTVFHLDTNLNNMDGILSKPAPLTPMNAHEIFDEVGSGKGSISYPSSNGAWNAPDSWAVLRDDDAGAQLPDTEDIGSPPRPEEKQHNYCIRVFRADGTFATLQMPLLTSVSELINQIVKKSYLQDPDKFKLVLKKHDLYKVLQSTDRPLLLQKRLLEQVGFEERDRIEDIGREDNSYLCRFLFYPFTDNSYEVMDQMEFLRSQKNNHIDLSGRSLSAIPVQLYPRANEIISLNLSRNLSLQVPRDFISVCPNLRDIKFNNNEARALPKSFGYASRLTMLDASNNRLESLESAALHNLTGLLKLNLANNKLKQLPREFEAFAVLRTLNISSNLLNNFPPFLAKLENLVDLDLSFNTIQSLPDNVGQMTSLERLVITNNELSGSLPPSFKNLRSLRELDIKYNAISNIDVISQLPKLEILSATRNNISQFSGTFERVRSIKLNWNPITKFEIKAPVPTLKALNLSNAQLASIDESFHNMSNLERLELDKNYFVSLPAHIGNLRRLEYFSIAHNSVGELPPEIGCLTELKRLDVRGNNIRKLPMELWWANKLDYLNASSNVLENFPKPASRAPHPPGETNGNTSFPTGRIGPPTGALSQTPSAEELNDPSRRPSQASSSLLSVGPSPVPGGADRKSSMVSVYGKGGRKTSVISRSTTQSSTALATPTASSRKDSSHTQRLTNTFAGSLRYLYMADNQLDDDCFDQLCMLENLRVLNLSYNDLSDMPQRSIKSWPQLVELYLSGNELASLPADDLEEYSMLQTLHINGNKFTNLPADISRAKKLTVFDCGSNSLKYNIANVPYDWNWNLNPNLRYLNLSGNRRLEIKQSSVPTAAQNREQYTDFGRLTNLRVLGLMDVTVLNSTLPDQSEDRRVRTSGSLAGYMPYGMADTLGSKNEHLSTIDLVVPRFNSNDSETLLGLFDGQALSSGGSKIAKYLQENFGHIFSQELRDLKNTENPADALRRSFLSLNKDLIAAGNTHTEDRSLMVHRGSTAPLVLSREDMNSGGVATIVYIQNQDLYVANVGDVQAMIIKSDSTHVMLTKKHDPADPNERTRIREAGGWVSRNGRLNDLLEVSRAFGYLDLMPAVQSAPNIEKHTIGEHDEMILIATREVWEYLPKDVLVDVTRSVRQDPDPMRAAQKVRDLAMAYGCSNKMTVQMLGVSNLKARRERSRQHKGQSMPVYASLQDDGGSSTGMRRARKARDGPLDSTLGRLDAEVPAPTGLIAIVFTDIKNSTQLWETYPEAMRTAIKNHNELMRRQLRTIGGFEVKTEGDAFMVSFPTATSALLWCFAVQCKLLHLDWPAELYNSVNCQPVYDRDNNLIFKGLSVRMGIHWGEPLSEPDPVTRRMDYYGPMVNKASRISACADGGQIAVSSDFIAEIQRCLEHYQEPTSTAVDLNEDSFATAIRSELRSLSGQGFEVKDMGEKKLKGLENPEFIYSLYPHALSGRIETHSKHEKEQAQDLREIRPAILSPGSELSVEPDDIWSLWRVALRLEMLCSMLEDNSKALQPPETGLLDRMRQRGGEVSEDFLVNFLDHQVSRIETCINTIYMRHLVSQSSIGSNFGALRGPMDEVLKVVAEQFQLVAEYKARYGDLRA.

Disordered regions lie at residues 1 to 115 (MPRN…RMSD), 127 to 236 (DPAG…SGAR), 266 to 307 (GKEH…PVPK), and 329 to 547 (VRDI…GPTD). Composition is skewed to low complexity over residues 7 to 23 (SSRFSSMTGSSTDSARS), 35 to 68 (PSASSSSPFAASSNQTSNASRSASHGSRRAAPSR), and 89 to 107 (SPTSTSPCVSPSSITSSNS). Polar residues-rich tracts occupy residues 134-148 (SRTQQNNPSSGSLSQ) and 159-205 (PASS…TESP). A compositionally biased stretch (low complexity) spans 217–234 (SIASITTTASSQGSRASG). Residues 269 to 281 (HRSHSYSHARPHR) are compositionally biased toward basic residues. Over residues 343–357 (NDSSQQNNPPKTSGS) the composition is skewed to polar residues. Positions 377–403 (KSNEDPRSLRPTVSREDSTISVPKDRN) are enriched in basic and acidic residues. Polar residues predominate over residues 404 to 441 (GSSTMYGTRSRAQSPAPSTTGSYWGHKSGSTDGQTSPG). Basic and acidic residues-rich tracts occupy residues 454-466 (RLKEKDDAPDLKK) and 495-511 (ADGKYQPDVRDGIRPDL). The region spanning 637–727 (HNYCIRVFRA…IEDIGREDNS (91 aa)) is the Ras-associating domain. 15 LRR repeats span residues 779-800 (EIISLNLSRNLSLQVPRDFISV), 803-824 (NLRDIKFNNNEARALPKSFGYA), 826-847 (RLTMLDASNNRLESLESAALHN), 850-871 (GLLKLNLANNKLKQLPREFEAF), 873-894 (VLRTLNISSNLLNNFPPFLAKL), 896-917 (NLVDLDLSFNTIQSLPDNVGQM), 919-941 (SLERLVITNNELSGSLPPSFKNL), 943-964 (SLRELDIKYNAISNIDVISQLP), 965-986 (KLEILSATRNNISQFSGTFERV), 987-1006 (RSIKLNWNPITKFEIKAPVP), 1007-1028 (TLKALNLSNAQLASIDESFHNM), 1030-1051 (NLERLELDKNYFVSLPAHIGNL), 1053-1074 (RLEYFSIAHNSVGELPPEIGCL), 1076-1097 (ELKRLDVRGNNIRKLPMELWWA), and 1099-1120 (KLDYLNASSNVLENFPKPASRA). Residues 1114–1226 (PKPASRAPHP…SSRKDSSHTQ (113 aa)) are disordered. Composition is skewed to low complexity over residues 1160–1179 (RPSQASSSLLSVGPSPVPGG) and 1201–1217 (SRSTTQSSTALATPTAS). LRR repeat units lie at residues 1235 to 1255 (SLRYLYMADNQLDDDCFDQLC), 1259 to 1280 (NLRVLNLSYNDLSDMPQRSIKS), 1283 to 1304 (QLVELYLSGNELASLPADDLEE), 1307 to 1328 (MLQTLHINGNKFTNLPADISRA), 1330 to 1352 (KLTVFDCGSNSLKYNIANVPYDW), and 1359 to 1380 (NLRYLNLSGNRRLEIKQSSVPT). In terms of domain architecture, PPM-type phosphatase spans 1432–1709 (PYGMADTLGS…NKMTVQMLGV (278 aa)). The tract at residues 1718 to 1760 (RSRQHKGQSMPVYASLQDDGGSSTGMRRARKARDGPLDSTLGR) is disordered. One can recognise a Guanylate cyclase domain in the interval 1773–1910 (AIVFTDIKNS…PMVNKASRIS (138 aa)). Positions 1778 and 1821 each coordinate Mg(2+).

Belongs to the adenylyl cyclase class-3 family. Requires Mg(2+) as cofactor.

It carries out the reaction ATP = 3',5'-cyclic AMP + diphosphate. Plays essential roles in regulation of cellular metabolism by catalyzing the synthesis of a second messenger, cAMP. This is Adenylate cyclase from Podospora anserina (Pleurage anserina).